The primary structure comprises 430 residues: MKANRDFGRDGGPFSITPNRFQPKSSGNPIFRQKTIRTVGIIALTLVLFLFFHRSFFSSFGEFPSFSSTANAPNSDVQEYDLRKVMNAKFTGDYSPKEKVLICAPLRNAAEHLNMFFGHMNNLTYPHELIDLAFLISDTDDNTLEVLKQHLDAIQNDEDESKHFNNVLIMLKDFGAIFGQEFSDRHGFAAQGPRRKLMARARNWLLSAAIQPYHSWVYWRDVDVETAPNTILEDLMRHDKDIIVPNVYRPLPDWLGNEQPYDLNSWAESETALQLADTLGEDDVIVEGYAEYATWRPHLAYLRDPNGDPSVEMPLDGIGGVSIMSKAKVHLEGCEFPAFSFEKHAETEGFGKMAKRMGFSVYGLPHYVIWHIYEPSDDDKRIMAEMERERKEREAAELEEAKKYQTAGFTQPDDQGAEEGPLAHADDHVD.

The interval 1–28 (MKANRDFGRDGGPFSITPNRFQPKSSGN) is disordered. The Cytoplasmic segment spans residues 1–37 (MKANRDFGRDGGPFSITPNRFQPKSSGNPIFRQKTIR). The span at 16 to 28 (ITPNRFQPKSSGN) shows a compositional bias: polar residues. The helical; Signal-anchor for type II membrane protein transmembrane segment at 38–57 (TVGIIALTLVLFLFFHRSFF) threads the bilayer. Topologically, residues 58–430 (SSFGEFPSFS…PLAHADDHVD (373 aa)) are lumenal. N-linked (GlcNAc...) asparagine glycosylation occurs at N122. The segment covering 387–403 (ERERKEREAAELEEAKK) has biased composition (basic and acidic residues). Residues 387–430 (ERERKEREAAELEEAKKYQTAGFTQPDDQGAEEGPLAHADDHVD) are disordered.

This sequence belongs to the ANP1/MMN9/VAN1 family. As to quaternary structure, component of the M-Pol II complex.

Its subcellular location is the endoplasmic reticulum membrane. The protein localises to the golgi apparatus membrane. In terms of biological role, the M-Pol II complex possesses alpha-1,6-mannosyltransferase activity and is probably involved in the elongation of the mannan backbone of N-linked glycans on cell wall and periplasmic proteins. This is Mannan polymerase II complex anp1 subunit (anp1) from Schizosaccharomyces pombe (strain 972 / ATCC 24843) (Fission yeast).